A 394-amino-acid chain; its full sequence is Flavin-dependent monooxygenase, oxygenase subunit HsaA (394 aa).

FMN-binding positions include Trp-84, 118–120 (SSY), 141–143 (WSS), Arg-263, 346–347 (AT), and 368–369 (HA).

The protein belongs to the HpaH/HsaA monooxygenase family. Homotetramer under anaerobic conditions. HsaAB monooxygenase consists of an oxygenase component HsaA and a reductase component HsaB.

It carries out the reaction 3-hydroxy-9,10-secoandrosta-1,3,5(10)-triene-9,17-dione + FMNH2 + O2 = 3,4-dihydroxy-9,10-secoandrosta-1,3,5(10)-triene-9,17-dione + FMN + H2O + H(+). The protein operates within lipid metabolism; steroid biosynthesis. Its function is as follows. Catalyzes the o-hydroxylation of 3-hydroxy-9,10-secoandrosta-1,3,5(10)-triene-9,17-dione (3-HSA) to 3,4-dihydroxy-9,10-secoandrosta-1,3,5(10)-triene-9,17-dione (3,4-DHSA) in the catabolism of cholesterol. This is Flavin-dependent monooxygenase, oxygenase subunit HsaA from Mycobacterium tuberculosis (strain CDC 1551 / Oshkosh).